Reading from the N-terminus, the 167-residue chain is uncharacterized protein (167 aa).

This is an uncharacterized protein from Acidianus bottle-shaped virus (isolate Italy/Pozzuoli) (ABV).